The following is a 511-amino-acid chain: Myrosinase 4 (511 aa).

A signal peptide spans 1–23; sequence MAIPKAHYSLAVLVLLFVVVSSS. Intrachain disulfides connect Cys-31/Cys-450, Cys-39/Cys-445, and Cys-230/Cys-233. Asn-46 and Asn-53 each carry an N-linked (GlcNAc...) asparagine glycan. A beta-D-glucoside-binding positions include Gln-64, His-165, and 210 to 211; that span reads NQ. The a beta-D-glucoside site is built by Tyr-351 and Glu-418. Glu-418 (nucleophile) is an active-site residue. An N-linked (GlcNAc...) asparagine glycan is attached at Asn-428. Residues Trp-467, 474-475, and Phe-483 contribute to the a beta-D-glucoside site; that span reads EF. Residue Asn-489 is glycosylated (N-linked (GlcNAc...) asparagine).

This sequence belongs to the glycosyl hydrolase 1 family. As to expression, specifically expressed in roots.

It carries out the reaction a thioglucoside + H2O = a sugar + a thiol.. The enzyme catalyses Hydrolysis of terminal, non-reducing beta-D-glucosyl residues with release of beta-D-glucose.. Hydrolyzes sinigrin and, with lower efficiency, p-nitrophenyl beta-D-glucoside. In Arabidopsis thaliana (Mouse-ear cress), this protein is Myrosinase 4.